A 209-amino-acid polypeptide reads, in one-letter code: Uracil phosphoribosyltransferase (209 aa).

Residues Arg-79, Arg-104, and 131–139 (DPMLATGGS) contribute to the 5-phospho-alpha-D-ribose 1-diphosphate site. Uracil contacts are provided by residues Ile-194 and 199-201 (GDA). Asp-200 contacts 5-phospho-alpha-D-ribose 1-diphosphate.

This sequence belongs to the UPRTase family. Mg(2+) serves as cofactor.

The enzyme catalyses UMP + diphosphate = 5-phospho-alpha-D-ribose 1-diphosphate + uracil. It functions in the pathway pyrimidine metabolism; UMP biosynthesis via salvage pathway; UMP from uracil: step 1/1. With respect to regulation, allosterically activated by GTP. Functionally, catalyzes the conversion of uracil and 5-phospho-alpha-D-ribose 1-diphosphate (PRPP) to UMP and diphosphate. In Lactiplantibacillus plantarum (strain ATCC BAA-793 / NCIMB 8826 / WCFS1) (Lactobacillus plantarum), this protein is Uracil phosphoribosyltransferase.